The chain runs to 559 residues: Glutamine--tRNA ligase (559 aa).

The 'HIGH' region signature appears at 44 to 54 (PEPNGYLHIGH). Residues 45-47 (EPN) and 51-57 (HIGHAKS) contribute to the ATP site. The L-glutamine site is built by Asp-77 and Tyr-222. Residues Thr-241 and 272 to 273 (RL) contribute to the ATP site. A 'KMSKS' region motif is present at residues 279-283 (LTSKR).

This sequence belongs to the class-I aminoacyl-tRNA synthetase family. In terms of assembly, monomer.

Its subcellular location is the cytoplasm. The catalysed reaction is tRNA(Gln) + L-glutamine + ATP = L-glutaminyl-tRNA(Gln) + AMP + diphosphate. This Actinobacillus succinogenes (strain ATCC 55618 / DSM 22257 / CCUG 43843 / 130Z) protein is Glutamine--tRNA ligase.